The following is a 289-amino-acid chain: Phosphatidylserine decarboxylase proenzyme (289 aa).

Active-site charge relay system; for autoendoproteolytic cleavage activity residues include Asp92, His149, and Ser254. Ser254 acts as the Schiff-base intermediate with substrate; via pyruvic acid; for decarboxylase activity in catalysis. A Pyruvic acid (Ser); by autocatalysis modification is found at Ser254.

This sequence belongs to the phosphatidylserine decarboxylase family. PSD-B subfamily. Prokaryotic type I sub-subfamily. In terms of assembly, heterodimer of a large membrane-associated beta subunit and a small pyruvoyl-containing alpha subunit. Requires pyruvate as cofactor. Is synthesized initially as an inactive proenzyme. Formation of the active enzyme involves a self-maturation process in which the active site pyruvoyl group is generated from an internal serine residue via an autocatalytic post-translational modification. Two non-identical subunits are generated from the proenzyme in this reaction, and the pyruvate is formed at the N-terminus of the alpha chain, which is derived from the carboxyl end of the proenzyme. The autoendoproteolytic cleavage occurs by a canonical serine protease mechanism, in which the side chain hydroxyl group of the serine supplies its oxygen atom to form the C-terminus of the beta chain, while the remainder of the serine residue undergoes an oxidative deamination to produce ammonia and the pyruvoyl prosthetic group on the alpha chain. During this reaction, the Ser that is part of the protease active site of the proenzyme becomes the pyruvoyl prosthetic group, which constitutes an essential element of the active site of the mature decarboxylase.

It localises to the cell membrane. The catalysed reaction is a 1,2-diacyl-sn-glycero-3-phospho-L-serine + H(+) = a 1,2-diacyl-sn-glycero-3-phosphoethanolamine + CO2. Its pathway is phospholipid metabolism; phosphatidylethanolamine biosynthesis; phosphatidylethanolamine from CDP-diacylglycerol: step 2/2. Catalyzes the formation of phosphatidylethanolamine (PtdEtn) from phosphatidylserine (PtdSer). This Pseudomonas paraeruginosa (strain DSM 24068 / PA7) (Pseudomonas aeruginosa (strain PA7)) protein is Phosphatidylserine decarboxylase proenzyme.